Consider the following 404-residue polypeptide: Exodeoxyribonuclease 7 large subunit (404 aa).

The protein belongs to the XseA family. Heterooligomer composed of large and small subunits.

The protein localises to the cytoplasm. It carries out the reaction Exonucleolytic cleavage in either 5'- to 3'- or 3'- to 5'-direction to yield nucleoside 5'-phosphates.. Functionally, bidirectionally degrades single-stranded DNA into large acid-insoluble oligonucleotides, which are then degraded further into small acid-soluble oligonucleotides. In Caldanaerobacter subterraneus subsp. tengcongensis (strain DSM 15242 / JCM 11007 / NBRC 100824 / MB4) (Thermoanaerobacter tengcongensis), this protein is Exodeoxyribonuclease 7 large subunit.